Consider the following 47-residue polypeptide: Large ribosomal subunit protein bL34 (47 aa).

The protein belongs to the bacterial ribosomal protein bL34 family.

This chain is Large ribosomal subunit protein bL34, found in Corynebacterium jeikeium (strain K411).